Reading from the N-terminus, the 449-residue chain is Acetolactate synthase small subunit 1, chloroplastic (449 aa).

A chloroplast-targeting transit peptide spans 1-30; the sequence is MEHIQTRTTLSQLSTLPSDKRLGAIRFKCL. ACT domains are found at residues 31-98 and 259-333; these read LVMK…DLSK and TLSM…DITH.

The protein belongs to the acetolactate synthase small subunit family. In terms of assembly, the acetolactate synthase complex contains both large catalytic subunits and small regulatory subunits.

Its subcellular location is the plastid. The protein localises to the chloroplast. It participates in amino-acid biosynthesis; L-isoleucine biosynthesis; L-isoleucine from 2-oxobutanoate: step 1/4. It functions in the pathway amino-acid biosynthesis; L-valine biosynthesis; L-valine from pyruvate: step 1/4. Its function is as follows. Regulatory subunit of acetohydroxy-acid synthase. Probably involved in feedback inhibition by branched-chain amino acids. Not involved in herbicide tolerance. This chain is Acetolactate synthase small subunit 1, chloroplastic, found in Nicotiana plumbaginifolia (Leadwort-leaved tobacco).